An 84-amino-acid polypeptide reads, in one-letter code: Cell division topological specificity factor (84 aa).

The protein belongs to the MinE family.

Prevents the cell division inhibition by proteins MinC and MinD at internal division sites while permitting inhibition at polar sites. This ensures cell division at the proper site by restricting the formation of a division septum at the midpoint of the long axis of the cell. The sequence is that of Cell division topological specificity factor from Cupriavidus taiwanensis (strain DSM 17343 / BCRC 17206 / CCUG 44338 / CIP 107171 / LMG 19424 / R1) (Ralstonia taiwanensis (strain LMG 19424)).